We begin with the raw amino-acid sequence, 301 residues long: Protoheme IX farnesyltransferase (301 aa).

Helical transmembrane passes span 9 to 29 (VLAY…VATI), 42 to 62 (IALI…ANSL), 89 to 109 (TSHA…WLWW), 113 to 133 (LLAG…YTMV), 142 to 162 (VVWG…AVTG), 168 to 188 (PIVL…ALAM), 211 to 231 (VTKQ…TLVP), 232 to 252 (AAGV…LLMA), and 280 to 300 (VVFV…GSLL).

This sequence belongs to the UbiA prenyltransferase family. Protoheme IX farnesyltransferase subfamily.

It is found in the cell membrane. It catalyses the reaction heme b + (2E,6E)-farnesyl diphosphate + H2O = Fe(II)-heme o + diphosphate. The protein operates within porphyrin-containing compound metabolism; heme O biosynthesis; heme O from protoheme: step 1/1. Functionally, converts heme B (protoheme IX) to heme O by substitution of the vinyl group on carbon 2 of heme B porphyrin ring with a hydroxyethyl farnesyl side group. The protein is Protoheme IX farnesyltransferase of Rhodococcus jostii (strain RHA1).